Reading from the N-terminus, the 290-residue chain is Ribonuclease HIII (290 aa).

The region spanning 78 to 290 (LPLIGTDEVG…FKNTEKAKNA (213 aa)) is the RNase H type-2 domain. Aspartate 84, glutamate 85, and aspartate 187 together coordinate a divalent metal cation.

This sequence belongs to the RNase HII family. RnhC subfamily. The cofactor is Mn(2+). Mg(2+) serves as cofactor.

Its subcellular location is the cytoplasm. The catalysed reaction is Endonucleolytic cleavage to 5'-phosphomonoester.. Functionally, endonuclease that specifically degrades the RNA of RNA-DNA hybrids. This is Ribonuclease HIII from Streptococcus pneumoniae (strain P1031).